The primary structure comprises 148 residues: Natriuretic peptide BF131 (148 aa).

The first 27 residues, 1–27 (MVGPSRLAGGGLLLLLLLALLPLALDG), serve as a signal peptide directing secretion. Residues 28-83 (KPAPPPQALPKDPAAASAAERIMRALLPDSKSSRPATDRMVHPEHQAGGGDTRRLQ) constitute a propeptide that is removed on maturation. Disordered stretches follow at residues 54 to 83 (LPDS…RRLQ) and 105 to 127 (TSDM…PSAA). The segment covering 63–83 (ATDRMVHPEHQAGGGDTRRLQ) has biased composition (basic and acidic residues). Cysteines 94 and 110 form a disulfide. The propeptide occupies 130 to 148 (AVTWLIRDLRADSKQSRAA).

The protein belongs to the natriuretic peptide family. Expressed by the venom gland.

The protein localises to the secreted. Its function is as follows. Natriuretic peptide that dose-dependently induces the rapid relaxation of rat aortic strips phenylephrine-precontracted. Acts by stimulating cGMP production in a dose-dependent manner (by probably activating NPR1 and/or NPR2). May also show potent hypotensive effects. The chain is Natriuretic peptide BF131 from Bungarus flaviceps flaviceps (Red-headed krait).